A 362-amino-acid chain; its full sequence is Isopentenyl-diphosphate delta-isomerase (362 aa).

Substrate is bound at residue 5-6 (RK). FMN contacts are provided by residues 63–65 (AMT), Ser-93, and Asn-122. Substrate is bound at residue Gln-152. Mg(2+) is bound at residue Glu-153. FMN contacts are provided by residues Lys-184, Thr-214, 259–261 (GIR), and 280–281 (AG).

The protein belongs to the IPP isomerase type 2 family. As to quaternary structure, homooctamer. Dimer of tetramers. FMN serves as cofactor. Requires NADPH as cofactor. The cofactor is Mg(2+).

The protein resides in the cytoplasm. The enzyme catalyses isopentenyl diphosphate = dimethylallyl diphosphate. Its function is as follows. Involved in the biosynthesis of isoprenoids. Catalyzes the 1,3-allylic rearrangement of the homoallylic substrate isopentenyl (IPP) to its allylic isomer, dimethylallyl diphosphate (DMAPP). In Nocardia farcinica (strain IFM 10152), this protein is Isopentenyl-diphosphate delta-isomerase.